The sequence spans 305 residues: E3 ubiquitin-protein ligase RNF115 (305 aa).

Ala-2 carries the post-translational modification N-acetylalanine. The segment covering 100–110 (NRANERGHQTH) has biased composition (basic and acidic residues). Positions 100–139 (NRANERGHQTHTDFWGPSRPPRLPMTRRYRSRGSTRPDRS) are disordered. At Ser-133 the chain carries Phosphoserine. An RING-type zinc finger spans residues 229–270 (CPVCKEDYTVEEKVRQLPCNHFFHSSCIVPWLELHDTCPVCR). A disordered region spans residues 274 to 305 (NGEDSTRQTQSSEASASNRFSNDSQLHDRWTF). A compositionally biased stretch (polar residues) spans 280–297 (RQTQSSEASASNRFSNDS).

In terms of assembly, interacts with RAB7A. Interacts with EGFR and FLT3. Interacts with BST2. Interacts with STX17. Interacts with YWHAE. Phosphorylated by AKT1, allowing association with the 14-3-3 chaperones that facilitates associating with TLRs. In terms of processing, deubiquitinated by USP9X; antogonizing its autoubiquitination and subsequent proteasomal degradation. Post-translationally, RING-type zinc finger-dependent and E2-dependent autoubiquitination.

It localises to the cytoplasm. The protein resides in the cytoplasmic vesicle. The protein localises to the phagosome. Its subcellular location is the nucleus. It is found in the endoplasmic reticulum. It localises to the golgi apparatus. The enzyme catalyses S-ubiquitinyl-[E2 ubiquitin-conjugating enzyme]-L-cysteine + [acceptor protein]-L-lysine = [E2 ubiquitin-conjugating enzyme]-L-cysteine + N(6)-ubiquitinyl-[acceptor protein]-L-lysine.. It functions in the pathway protein modification; protein ubiquitination. Functionally, E3 ubiquitin-protein ligase that catalyzes the 'Lys-48'- and/or 'Lys-63'-linked polyubiquitination of various substrates and thereby plays a role in a number of signaling pathways including autophagy, innate immunity, cell proliferation and cell death. Plays a role in the endosomal trafficking and degradation of membrane receptors including EGFR, FLT3, MET and CXCR4 through their polyubiquitination. Participates together with BST2 in antiviral immunity by facilitating the internalization of HIV-1 virions into intracellular vesicles leading to their lysosomal degradation. Also possesses an antiviral activity independently of BST2 by promoting retroviral GAG proteins ubiquitination, redistribution to endo-lysosomal compartments and, ultimately, lysosomal degradation. Catalyzes distinct types of ubiquitination on MAVS and STING1 at different phases of viral infection to promote innate antiviral response. Mediates the 'Lys-48'-linked ubiquitination of MAVS leading to its proteasomal degradation and ubiquitinates STING1 via 'Lys-63'-linked polyubiquitination, critical for its oligomerization and the subsequent recruitment of TBK1. Plays a positive role in the autophagosome-lysosome fusion by interacting with STX17 and enhancing its stability without affecting 'Lys-48'- or 'Lys-63'-linked polyubiquitination levels, which in turn promotes autophagosome maturation. Negatively regulates TLR-induced expression of proinflammatory cytokines by catalyzing 'Lys-11'-linked ubiquitination of RAB1A and RAB13 to inhibit post-ER trafficking of TLRs to the Golgi by RAB1A and subsequently from the Golgi apparatus to the cell surface by RAB13. The protein is E3 ubiquitin-protein ligase RNF115 of Mus musculus (Mouse).